The primary structure comprises 158 residues: Small ribosomal subunit protein uS7 (158 aa).

The protein belongs to the universal ribosomal protein uS7 family. In terms of assembly, part of the 30S ribosomal subunit. Contacts proteins S9 and S11.

Functionally, one of the primary rRNA binding proteins, it binds directly to 16S rRNA where it nucleates assembly of the head domain of the 30S subunit. Is located at the subunit interface close to the decoding center, probably blocks exit of the E-site tRNA. The polypeptide is Small ribosomal subunit protein uS7 (Acidiphilium cryptum (strain JF-5)).